Reading from the N-terminus, the 594-residue chain is RING finger protein 207 (594 aa).

The RING-type zinc finger occupies 25 to 64 (CPLCHAQYERPCLLDCFHDFCAGCLRGRTADGRVACPLCQ). Residues 93-145 (VEAVHCANCDLDCSKQDAETACFCNTCGQPLCARCRDETHRARMFARHDIVAL) form a B box-type; atypical zinc finger. Positions 98, 101, 127, and 132 each coordinate Zn(2+). The disordered stretch occupies residues 369–400 (NTLAGGSGPKVLMGPSCPSPVRKVSRSPVQKP). Residues 424–458 (CRHYEDSYRGLQAEVQNLKDQVQELHRDLTKHHSL) are a coiled coil. The disordered stretch occupies residues 552-594 (FQASADDESENPQTAYDASRNGETPASLLLPGSVASAEPPFVN). The span at 562-575 (NPQTAYDASRNGET) shows a compositional bias: polar residues.

In terms of assembly, interacts with the core-glycosylated, but not the fully glycosylated form of KCNH2/HERG. Interacts with DNAJA1 and HSPA8. Interacts (via the C-terminus) with HSPA1A; this interaction additively increases KCNH2 expression.

It localises to the cytoplasm. Functionally, plays a role in cardiac repolarization possibly by stabilizing membrane expression of the potassium channel KCNH2/HERG, or by assisting its synthesis, folding or export from the endoplasmic reticulum, in a heat shock protein-dependent manner. The protein is RING finger protein 207 (RNF207) of Oryctolagus cuniculus (Rabbit).